Here is a 348-residue protein sequence, read N- to C-terminus: Dihydroorotase (348 aa).

His17 and His19 together coordinate Zn(2+). Residues 19–21 and Asn45 contribute to the substrate site; that span reads HLR. 3 residues coordinate Zn(2+): Lys103, His140, and His178. Lys103 carries the post-translational modification N6-carboxylysine. Substrate is bound at residue His140. Leu223 is a binding site for substrate. Asp251 serves as a coordination point for Zn(2+). Asp251 is a catalytic residue. Residues His255 and Ala267 each coordinate substrate.

This sequence belongs to the metallo-dependent hydrolases superfamily. DHOase family. Class II DHOase subfamily. As to quaternary structure, homodimer. It depends on Zn(2+) as a cofactor.

It catalyses the reaction (S)-dihydroorotate + H2O = N-carbamoyl-L-aspartate + H(+). Its pathway is pyrimidine metabolism; UMP biosynthesis via de novo pathway; (S)-dihydroorotate from bicarbonate: step 3/3. In terms of biological role, catalyzes the reversible cyclization of carbamoyl aspartate to dihydroorotate. The sequence is that of Dihydroorotase from Escherichia coli O157:H7.